The primary structure comprises 148 residues: NADH-quinone oxidoreductase subunit C (148 aa).

Belongs to the complex I 30 kDa subunit family. NDH-1 is composed of 14 different subunits. Subunits NuoB, C, D, E, F, and G constitute the peripheral sector of the complex.

Its subcellular location is the cell membrane. It catalyses the reaction a quinone + NADH + 5 H(+)(in) = a quinol + NAD(+) + 4 H(+)(out). Its function is as follows. NDH-1 shuttles electrons from NADH, via FMN and iron-sulfur (Fe-S) centers, to quinones in the respiratory chain. The immediate electron acceptor for the enzyme in this species is believed to be a menaquinone. Couples the redox reaction to proton translocation (for every two electrons transferred, four hydrogen ions are translocated across the cytoplasmic membrane), and thus conserves the redox energy in a proton gradient. This chain is NADH-quinone oxidoreductase subunit C, found in Moorella thermoacetica (strain ATCC 39073 / JCM 9320).